Here is a 607-residue protein sequence, read N- to C-terminus: Autophagy-related protein 22-2 (607 aa).

The segment at 1-29 (MTVAPPSPNSPAAELQQRPPRYPGEDTTP) is disordered. A helical transmembrane segment spans residues 41-61 (YGIAAEVFAVCGVGSFLPLTL). N-linked (GlcNAc...) asparagine glycosylation occurs at Asn-89. 3 helical membrane-spanning segments follow: residues 119–139 (SFAM…LISF), 151–170 (TLLL…FVFI), and 188–208 (CLGS…ANDP). The segment at 235 to 263 (SFSASDAESGPHPAAEAGSGTSSGPASPE) is disordered. Low complexity predominate over residues 247–263 (PAAEAGSGTSSGPASPE). A run of 4 helical transmembrane segments spans residues 274-294 (GVGL…SLLF), 307-327 (TLPL…FTMV), 379-399 (VLVF…VSGT), and 415-435 (VGLL…LWPV). An N-linked (GlcNAc...) asparagine glycan is attached at Asn-445. The next 4 helical transmembrane spans lie at 450–470 (LCIA…IPVF), 485–507 (FPLA…SFFG), 519–541 (YALY…GMLI), and 550–570 (GFFF…IVNA). Positions 586 to 607 (KGHETEMSEQTEEAEGLLARGI) are disordered.

The protein belongs to the ATG22 family.

It is found in the vacuole membrane. Vacuolar effluxer which mediate the efflux of amino acids resulting from autophagic degradation. The release of autophagic amino acids allows the maintenance of protein synthesis and viability during nitrogen starvation. In Aspergillus oryzae (strain ATCC 42149 / RIB 40) (Yellow koji mold), this protein is Autophagy-related protein 22-2 (atg22-2).